The chain runs to 251 residues: Ditrans,polycis-undecaprenyl-diphosphate synthase ((2E,6E)-farnesyl-diphosphate specific) (251 aa).

D26 is an active-site residue. Position 26 (D26) interacts with Mg(2+). Residues 27 to 30, W31, R39, H43, and 71 to 73 contribute to the substrate site; these read GNGR and SSE. Catalysis depends on N74, which acts as the Proton acceptor. Substrate is bound by residues W75, R77, R194, and 200 to 202; that span reads RIS. Position 213 (E213) interacts with Mg(2+).

It belongs to the UPP synthase family. As to quaternary structure, homodimer. The cofactor is Mg(2+).

It catalyses the reaction 8 isopentenyl diphosphate + (2E,6E)-farnesyl diphosphate = di-trans,octa-cis-undecaprenyl diphosphate + 8 diphosphate. Catalyzes the sequential condensation of isopentenyl diphosphate (IPP) with (2E,6E)-farnesyl diphosphate (E,E-FPP) to yield (2Z,6Z,10Z,14Z,18Z,22Z,26Z,30Z,34E,38E)-undecaprenyl diphosphate (di-trans,octa-cis-UPP). UPP is the precursor of glycosyl carrier lipid in the biosynthesis of bacterial cell wall polysaccharide components such as peptidoglycan and lipopolysaccharide. This is Ditrans,polycis-undecaprenyl-diphosphate synthase ((2E,6E)-farnesyl-diphosphate specific) from Buchnera aphidicola subsp. Acyrthosiphon pisum (strain APS) (Acyrthosiphon pisum symbiotic bacterium).